Here is a 170-residue protein sequence, read N- to C-terminus: Lipoprotein signal peptidase (170 aa).

A run of 3 helical transmembrane segments spans residues 5 to 25 (IVGV…KAYA), 62 to 82 (SNLI…VLFV), and 89 to 111 (STIC…LRFG). Active-site residues include Asp115 and Asp133. The helical transmembrane segment at 126–146 (WPAFNFADVCVTCGVICFLCL) threads the bilayer.

Belongs to the peptidase A8 family.

The protein resides in the cell inner membrane. It carries out the reaction Release of signal peptides from bacterial membrane prolipoproteins. Hydrolyzes -Xaa-Yaa-Zaa-|-(S,diacylglyceryl)Cys-, in which Xaa is hydrophobic (preferably Leu), and Yaa (Ala or Ser) and Zaa (Gly or Ala) have small, neutral side chains.. Its pathway is protein modification; lipoprotein biosynthesis (signal peptide cleavage). In terms of biological role, this protein specifically catalyzes the removal of signal peptides from prolipoproteins. The sequence is that of Lipoprotein signal peptidase from Anaplasma marginale (strain Florida).